Here is a 332-residue protein sequence, read N- to C-terminus: Transaldolase (332 aa).

The active-site Schiff-base intermediate with substrate is Lys-136.

This sequence belongs to the transaldolase family. Type 1 subfamily.

Its subcellular location is the cytoplasm. It catalyses the reaction D-sedoheptulose 7-phosphate + D-glyceraldehyde 3-phosphate = D-erythrose 4-phosphate + beta-D-fructose 6-phosphate. It participates in carbohydrate degradation; pentose phosphate pathway; D-glyceraldehyde 3-phosphate and beta-D-fructose 6-phosphate from D-ribose 5-phosphate and D-xylulose 5-phosphate (non-oxidative stage): step 2/3. Its function is as follows. Transaldolase is important for the balance of metabolites in the pentose-phosphate pathway. The chain is Transaldolase from Trichormus variabilis (strain ATCC 29413 / PCC 7937) (Anabaena variabilis).